The chain runs to 505 residues: Glycerol kinase (505 aa).

ADP is bound at residue Thr-15. 3 residues coordinate ATP: Thr-15, Thr-16, and Ser-17. Residue Thr-15 coordinates sn-glycerol 3-phosphate. Arg-19 serves as a coordination point for ADP. Sn-glycerol 3-phosphate-binding residues include Arg-85, Glu-86, Tyr-136, and Asp-249. Glycerol-binding residues include Arg-85, Glu-86, Tyr-136, Asp-249, and Gln-250. ADP is bound by residues Thr-271 and Gly-314. The ATP site is built by Thr-271, Gly-314, Gln-318, and Gly-415. Gly-415 and Asn-419 together coordinate ADP.

It belongs to the FGGY kinase family.

It catalyses the reaction glycerol + ATP = sn-glycerol 3-phosphate + ADP + H(+). The protein operates within polyol metabolism; glycerol degradation via glycerol kinase pathway; sn-glycerol 3-phosphate from glycerol: step 1/1. Inhibited by fructose 1,6-bisphosphate (FBP). Functionally, key enzyme in the regulation of glycerol uptake and metabolism. Catalyzes the phosphorylation of glycerol to yield sn-glycerol 3-phosphate. The protein is Glycerol kinase of Mycoplasma capricolum subsp. capricolum (strain California kid / ATCC 27343 / NCTC 10154).